The sequence spans 96 residues: Small ribosomal subunit protein bS18 (96 aa).

Belongs to the bacterial ribosomal protein bS18 family. Part of the 30S ribosomal subunit. Forms a tight heterodimer with protein bS6.

Functionally, binds as a heterodimer with protein bS6 to the central domain of the 16S rRNA, where it helps stabilize the platform of the 30S subunit. This Borreliella burgdorferi (strain ATCC 35210 / DSM 4680 / CIP 102532 / B31) (Borrelia burgdorferi) protein is Small ribosomal subunit protein bS18.